Consider the following 133-residue polypeptide: Helix-loop-helix protein 1 (133 aa).

Residues 1–79 (MMLNSDTMEL…RRATAKYRTA (79 aa)) form a disordered region. Residues 25–45 (DCGGGAGPDGAGPGGPGGGQA) are compositionally biased toward gly residues. The segment covering 52-65 (EPGRKDLQHLSREE) has biased composition (basic and acidic residues). Positions 66 to 79 (RRRRRRATAKYRTA) are enriched in basic residues. One can recognise a bHLH domain in the interval 75-127 (KYRTAHATRERIRVEAFNLAFAELRKLLPTLPPDKKLSKIEILRLAICYISYL).

In terms of assembly, efficient DNA binding requires dimerization with another bHLH protein.

It is found in the nucleus. May serve as DNA-binding protein and may be involved in the control of cell-type determination, possibly within the developing nervous system. This Homo sapiens (Human) protein is Helix-loop-helix protein 1 (NHLH1).